The sequence spans 197 residues: HTH-type transcriptional repressor BdcR (197 aa).

The HTH tetR-type domain maps to 15–75; sequence RFAPEQAISA…RVLNEYVGTE (61 aa). A DNA-binding region (H-T-H motif) is located at residues 38–57; the sequence is SVAEVTDYLGINPPSLYAAF.

Functionally, negatively regulates expression of bdcA. This chain is HTH-type transcriptional repressor BdcR (bdcR), found in Escherichia coli (strain K12).